We begin with the raw amino-acid sequence, 333 residues long: Probable cytosolic iron-sulfur protein assembly protein 1 (333 aa).

WD repeat units lie at residues 12–50, 55–94, 107–146, 153–192, 197–238, 250–288, and 298–333; these read LHDDKCWSVDVNNGGIMATGSTDRKIKLVDIRSFQIIEE, AHKKTVRSVAWRPHSNILAAGSFDSTVSIWGKDDDGYNDE, GHENEIKCVAWSHDGELLATCSRDKSVWIWEADEMGEEFE, EHSQDVKHVIWHQSLPLLASSSYDDTVRIWKDCDDDWECC, GHEG…GEYE, AHTRAVYSVNWSPKGYIASTGSDGRLVIYKESEDGWIVE, and YETNMVKWVEYGSKDVILLITAGDDGHVNVWKFDEN.

The protein belongs to the WD repeat CIA1 family. As to quaternary structure, interacts with NAR1.

It is found in the cytoplasm. The protein localises to the nucleus. Its function is as follows. Essential component of the cytosolic iron-sulfur (Fe/S) protein assembly machinery. Required for the maturation of extramitochondrial Fe/S proteins. This Kluyveromyces lactis (strain ATCC 8585 / CBS 2359 / DSM 70799 / NBRC 1267 / NRRL Y-1140 / WM37) (Yeast) protein is Probable cytosolic iron-sulfur protein assembly protein 1.